A 292-amino-acid polypeptide reads, in one-letter code: Acetylglutamate kinase (292 aa).

Substrate is bound by residues 60 to 61 (GG), Arg-82, and Asn-187.

This sequence belongs to the acetylglutamate kinase family. ArgB subfamily.

It is found in the cytoplasm. The enzyme catalyses N-acetyl-L-glutamate + ATP = N-acetyl-L-glutamyl 5-phosphate + ADP. It functions in the pathway amino-acid biosynthesis; L-arginine biosynthesis; N(2)-acetyl-L-ornithine from L-glutamate: step 2/4. Catalyzes the ATP-dependent phosphorylation of N-acetyl-L-glutamate. This Methanobrevibacter smithii (strain ATCC 35061 / DSM 861 / OCM 144 / PS) protein is Acetylglutamate kinase.